The following is a 918-amino-acid chain: Protein translocase subunit SecA (918 aa).

ATP contacts are provided by residues glutamine 87, 105 to 109 (GEGKT), and aspartate 500. Residues 876–918 (AGALPVAETLERDTPESWRNTPRNAPCPCGSGKKYKHCHGQAR) form a disordered region. Zn(2+) contacts are provided by cysteine 902, cysteine 904, cysteine 913, and histidine 914. Residues 908 to 918 (KKYKHCHGQAR) show a composition bias toward basic residues.

This sequence belongs to the SecA family. In terms of assembly, monomer and homodimer. Part of the essential Sec protein translocation apparatus which comprises SecA, SecYEG and auxiliary proteins SecDF-YajC and YidC. Zn(2+) serves as cofactor.

The protein localises to the cell inner membrane. The protein resides in the cytoplasm. The catalysed reaction is ATP + H2O + cellular proteinSide 1 = ADP + phosphate + cellular proteinSide 2.. Functionally, part of the Sec protein translocase complex. Interacts with the SecYEG preprotein conducting channel. Has a central role in coupling the hydrolysis of ATP to the transfer of proteins into and across the cell membrane, serving both as a receptor for the preprotein-SecB complex and as an ATP-driven molecular motor driving the stepwise translocation of polypeptide chains across the membrane. In Rhodospirillum centenum (strain ATCC 51521 / SW), this protein is Protein translocase subunit SecA.